We begin with the raw amino-acid sequence, 159 residues long: Endoribonuclease YbeY (159 aa).

Positions 117, 121, and 127 each coordinate Zn(2+).

This sequence belongs to the endoribonuclease YbeY family. The cofactor is Zn(2+).

The protein resides in the cytoplasm. In terms of biological role, single strand-specific metallo-endoribonuclease involved in late-stage 70S ribosome quality control and in maturation of the 3' terminus of the 16S rRNA. The polypeptide is Endoribonuclease YbeY (Azorhizobium caulinodans (strain ATCC 43989 / DSM 5975 / JCM 20966 / LMG 6465 / NBRC 14845 / NCIMB 13405 / ORS 571)).